Here is a 188-residue protein sequence, read N- to C-terminus: Ribosome maturation factor RimM (188 aa).

The 74-residue stretch at 93-166 (EDEYYDHQLI…RAVIDPPPGL (74 aa)) folds into the PRC barrel domain.

Belongs to the RimM family. As to quaternary structure, binds ribosomal protein uS19.

It localises to the cytoplasm. In terms of biological role, an accessory protein needed during the final step in the assembly of 30S ribosomal subunit, possibly for assembly of the head region. Essential for efficient processing of 16S rRNA. May be needed both before and after RbfA during the maturation of 16S rRNA. It has affinity for free ribosomal 30S subunits but not for 70S ribosomes. This Streptomyces coelicolor (strain ATCC BAA-471 / A3(2) / M145) protein is Ribosome maturation factor RimM.